The primary structure comprises 651 residues: Probable potassium transport system protein Kup (651 aa).

A run of 12 helical transmembrane segments spans residues 41-61, 82-102, 130-150, 163-183, 194-214, 235-255, 276-296, 309-329, 366-386, 395-415, 426-446, and 450-470; these read LVLGALGVVYGDIGTSPIYAF, VVSLIFWALTLVVTVKYVLFV, LILGVGICGAALFFGDAVITP, IVAPNLTPFVVPAAVVILVTL, VAIVFGPIMALWFVALGASGL, FLTVSPAVAFVTVGAVFLAMT, WLWIVFPCLLLNYFGQAAFIL, MIPSFALWPMVLLATAATVIA, IYIPRVNLLLGLAVVILVLGF, AYGIAVTGNMLVTTVLLYIAM, ALPIILGFLVIDMLFFSANII, and EGGWASIGIATVLVLIMWTWV.

This sequence belongs to the HAK/KUP transporter (TC 2.A.72) family.

Its subcellular location is the cell inner membrane. It carries out the reaction K(+)(in) + H(+)(in) = K(+)(out) + H(+)(out). Transport of potassium into the cell. Likely operates as a K(+):H(+) symporter. The protein is Probable potassium transport system protein Kup of Brucella abortus (strain S19).